Here is a 344-residue protein sequence, read N- to C-terminus: Uroporphyrinogen decarboxylase (344 aa).

Substrate-binding positions include 25-29, Asp-75, Tyr-152, Ser-207, and His-323; that span reads RQAGR.

The protein belongs to the uroporphyrinogen decarboxylase family. In terms of assembly, homodimer.

It is found in the cytoplasm. The catalysed reaction is uroporphyrinogen III + 4 H(+) = coproporphyrinogen III + 4 CO2. The protein operates within porphyrin-containing compound metabolism; protoporphyrin-IX biosynthesis; coproporphyrinogen-III from 5-aminolevulinate: step 4/4. Catalyzes the decarboxylation of four acetate groups of uroporphyrinogen-III to yield coproporphyrinogen-III. In Ruegeria pomeroyi (strain ATCC 700808 / DSM 15171 / DSS-3) (Silicibacter pomeroyi), this protein is Uroporphyrinogen decarboxylase.